We begin with the raw amino-acid sequence, 298 residues long: Protein transport protein SEC13-1 (298 aa).

WD repeat units follow at residues 7–46 (AHND…HKLV), 51–92 (GHEG…WSQI), 97–138 (VHTA…TATP), 143–196 (AHAI…QSYL), 203–245 (GHSD…GPWV), and 253–292 (EFPD…KWES).

This sequence belongs to the WD repeat SEC13 family. As to quaternary structure, the COPII coat is composed of at least 5 proteins: the SEC23/24 complex, the SEC13/31 complex, and the protein SAR1. Component of the nuclear pore complex (NPC). NPC constitutes the exclusive means of nucleocytoplasmic transport. NPCs allow the passive diffusion of ions and small molecules and the active, nuclear transport receptor-mediated bidirectional transport of macromolecules such as proteins, RNAs, ribonucleoparticles (RNPs), and ribosomal subunits across the nuclear envelope. Due to its 8-fold rotational symmetry, all subunits are present with 8 copies or multiples thereof.

It is found in the cytoplasmic vesicle. Its subcellular location is the COPII-coated vesicle membrane. The protein localises to the endoplasmic reticulum membrane. The protein resides in the nucleus. It localises to the nuclear pore complex. Component of the coat protein complex II (COPII) which promotes the formation of transport vesicles from the endoplasmic reticulum (ER). The coat has two main functions, the physical deformation of the endoplasmic reticulum membrane into vesicles and the selection of cargo molecules. It also functions as a component of the nuclear pore complex (NPC). NPC components, collectively referred to as nucleoporins (NUPs), can play the role of both NPC structural components and of docking or interaction partners for transiently associated nuclear transport factors. SEC13 is required for efficient mRNA export from the nucleus to the cytoplasm and for correct nuclear pore biogenesis and distribution. This chain is Protein transport protein SEC13-1 (SEC131), found in Candida glabrata (strain ATCC 2001 / BCRC 20586 / JCM 3761 / NBRC 0622 / NRRL Y-65 / CBS 138) (Yeast).